Here is a 429-residue protein sequence, read N- to C-terminus: Ribosomal RNA small subunit methyltransferase B (429 aa).

S-adenosyl-L-methionine-binding positions include 254–260, Asp277, Asp303, and Asp322; that span reads CAAPGGK. Cys375 serves as the catalytic Nucleophile. A disordered region spans residues 397 to 419; the sequence is ALSETGTPDQPGQQNLPGGEEGD. The segment covering 400-412 has biased composition (polar residues); sequence ETGTPDQPGQQNL.

It belongs to the class I-like SAM-binding methyltransferase superfamily. RsmB/NOP family.

It localises to the cytoplasm. It carries out the reaction cytidine(967) in 16S rRNA + S-adenosyl-L-methionine = 5-methylcytidine(967) in 16S rRNA + S-adenosyl-L-homocysteine + H(+). Its function is as follows. Specifically methylates the cytosine at position 967 (m5C967) of 16S rRNA. This Salmonella typhi protein is Ribosomal RNA small subunit methyltransferase B.